A 5207-amino-acid polypeptide reads, in one-letter code: NBPF family member NBPF20 (5207 aa).

Olduvai domains are found at residues 5-77 (SREL…PSCP), 80-135 (SREL…LDVD), 136-228 (RTKK…RSKK), 229-321 (ERRR…PSCP), 324-379 (SREL…LDVD), 380-472 (RTKK…RSKK), 473-565 (ERRR…PSCP), 568-623 (SREL…LDVD), 624-716 (RTKK…RSKK), 717-809 (ERRR…PSCP), 812-867 (SREL…LDVD), 868-960 (RTKK…RSKK), 961-1053 (ERRR…PSCP), 1056-1111 (SREL…LDVD), 1112-1204 (RTKK…RSKK), 1205-1297 (ERRR…PSCP), 1300-1355 (SREL…LDVD), 1356-1448 (RTKK…RSKK), 1449-1541 (ERRR…PSCP), 1544-1599 (SREL…LDVD), 1600-1692 (RTKK…RSKK), 1693-1785 (ERRR…PSCP), 1788-1843 (SREL…LDVD), 1844-1936 (RTKK…RSKK), 1937-2029 (ERRR…PSCP), 2032-2087 (SREL…LDVD), 2088-2180 (RTKK…RSKK), 2181-2273 (ERRR…PSCP), 2276-2331 (SREL…LDVD), 2332-2424 (RTKK…RSKK), 2425-2517 (ERRR…PSCP), 2520-2575 (SREL…LDVD), 2576-2668 (RTKK…RSKK), 2669-2761 (ERRR…PSCP), 2764-2819 (SREL…LDVD), 2820-2912 (RTKK…RSKK), 2913-3005 (ERRR…PSCP), 3008-3063 (SREL…LDVD), 3064-3156 (RTKK…RSKK), 3157-3249 (ERRR…PSCP), 3252-3307 (SREL…LDVD), 3308-3400 (RTKK…RSKK), 3401-3493 (ERRR…PSCP), 3496-3551 (SREL…LDVD), 3552-3644 (RTKK…RSKK), 3645-3737 (ERRR…PSCP), 3740-3795 (SREL…LDVD), 3796-3888 (RTKK…RSKK), 3889-3981 (ERRR…PSCP), 3984-4039 (SREL…LDVD), 4040-4132 (RTKK…RSKK), 4133-4225 (ERRR…PSCP), 4228-4283 (SREL…LDVD), 4284-4376 (RTKK…RSKK), 4377-4452 (ERRR…LDVD), 4453-4545 (RTKK…RSKK), 4546-4621 (ERRR…LDVD), 4622-4713 (RTKK…PSCP), 4716-4771 (SREL…LDVD), 4772-4864 (RTKK…RSKK), 4865-4957 (ERRR…PSCP), 4960-5015 (SREL…LDVD), 5016-5108 (RTKK…RSKK), and 5109-5207 (KRRR…IFPQ). 2 disordered regions span residues 137 to 157 (TKKD…LSRE) and 215 to 256 (KGKG…LDEK). Residues 216 to 234 (GKGKKRRGRRSKKERRRGR) show a composition bias toward basic residues. Disordered stretches follow at residues 381–403 (TKKD…RELL) and 459–513 (KGKG…DRSY). A compositionally biased stretch (basic residues) spans 460–478 (GKGKKRRGRRSKKERRRGR). Residues 492 to 502 (LSRELLDEKGP) are compositionally biased toward basic and acidic residues. Disordered stretches follow at residues 625–647 (TKKD…RELL) and 703–744 (KGKG…LDEK). A compositionally biased stretch (basic residues) spans 704-722 (GKGKKRRGRRSKKERRRGR). 2 disordered regions span residues 869-891 (TKKD…RELL) and 947-1001 (KGKG…DRSY). Positions 948 to 966 (GKGKKRRGRRSKKERRRGR) are enriched in basic residues. Over residues 980 to 990 (LSRELLDEKGP) the composition is skewed to basic and acidic residues. 2 disordered regions span residues 1113–1135 (TKKD…RELL) and 1191–1245 (KGKG…DRSY). Positions 1192 to 1210 (GKGKKRRGRRSKKERRRGR) are enriched in basic residues. Positions 1224–1234 (LSRELLDEKGP) are enriched in basic and acidic residues. Disordered regions lie at residues 1357–1379 (TKKD…RELL) and 1435–1489 (KGKG…DRSY). Residues 1436–1454 (GKGKKRRGRRSKKERRRGR) are compositionally biased toward basic residues. The span at 1468 to 1478 (LSRELLDEKGP) shows a compositional bias: basic and acidic residues. 2 disordered regions span residues 1601 to 1623 (TKKD…RELL) and 1679 to 1733 (KGKG…DRSY). Basic residues predominate over residues 1680-1698 (GKGKKRRGRRSKKERRRGR). The segment covering 1712 to 1722 (LSRELLDEKGP) has biased composition (basic and acidic residues). Disordered stretches follow at residues 1845–1867 (TKKD…RELL) and 1923–1964 (KGKG…LDEK). A compositionally biased stretch (basic residues) spans 1924 to 1942 (GKGKKRRGRRSKKERRRGR). Disordered stretches follow at residues 2089–2111 (TKKD…RELL) and 2167–2208 (KGKG…LDEK). Over residues 2168 to 2186 (GKGKKRRGRRSKKERRRGR) the composition is skewed to basic residues. Disordered regions lie at residues 2333-2355 (TKKD…RELL) and 2411-2452 (KGKG…LDEK). Residues 2412–2430 (GKGKKRRGRRSKKERRRGR) are compositionally biased toward basic residues. 2 disordered regions span residues 2577–2599 (TKKD…RELL) and 2655–2709 (KGKG…DRSY). Residues 2656-2674 (GKGKKRRGRRSKKERRRGR) are compositionally biased toward basic residues. Positions 2688 to 2698 (LSRELLDEKGP) are enriched in basic and acidic residues. Disordered stretches follow at residues 2821-2843 (TKKD…RELL) and 2899-2953 (KGKG…DRSY). Basic residues predominate over residues 2900–2918 (GKGKKRRGRRSKKERRRGR). The span at 2932–2942 (LSRELLDEKGP) shows a compositional bias: basic and acidic residues. Disordered stretches follow at residues 3065-3087 (TKKD…RELL) and 3143-3197 (KGKG…DRSY). The segment covering 3144–3162 (GKGKKRRGRRSKKERRRGR) has biased composition (basic residues). Over residues 3176-3186 (LSRELLDEKGP) the composition is skewed to basic and acidic residues. Disordered stretches follow at residues 3309 to 3331 (TKKD…RELL) and 3387 to 3441 (KGKG…DRSY). The segment covering 3388 to 3406 (GKGKKRRGRRSKKERRRGR) has biased composition (basic residues). A compositionally biased stretch (basic and acidic residues) spans 3420 to 3430 (LSRELLDEKGP). Disordered regions lie at residues 3553-3575 (TKKD…RELL) and 3631-3672 (KGKG…LDEK). Residues 3632 to 3650 (GKGKKRRGRRSKKERRRGR) are compositionally biased toward basic residues. Disordered stretches follow at residues 3797-3819 (TKKD…RELL) and 3875-3916 (KGKG…LDEK). The segment covering 3876-3894 (GKGKKRRGRRSKKERRRGR) has biased composition (basic residues). Disordered regions lie at residues 4041-4063 (TKKD…RELL) and 4119-4160 (KGKG…LDEK). A compositionally biased stretch (basic residues) spans 4120–4138 (GKGKKRRGRRSKKERRRGR). Disordered stretches follow at residues 4285-4307 (TKKD…RELL), 4361-4404 (EKKG…LDEK), 4453-4474 (RTKK…LSRE), and 4530-4573 (EKKG…LDEK). A compositionally biased stretch (basic residues) spans 4364–4382 (GKGKKRRGRRSKKERRRGR). Residues 4533–4551 (GKGKKRRGRRSKKERRRGR) are compositionally biased toward basic residues. 2 disordered regions span residues 4773–4793 (TKKD…LSRE) and 4851–4889 (KGKG…RELL). Residues 4852–4870 (GKGKKRRGRRSKKERRRGR) show a composition bias toward basic residues. 2 disordered regions span residues 5017–5037 (TKKD…LSRE) and 5094–5128 (KKGK…CPRL). Over residues 5096-5114 (GKGKKRRGRRSKKKRRRGR) the composition is skewed to basic residues.

It belongs to the NBPF family.

The protein resides in the cytoplasm. The sequence is that of NBPF family member NBPF20 from Homo sapiens (Human).